Here is a 464-residue protein sequence, read N- to C-terminus: Protein FAM90A8 (464 aa).

Disordered stretches follow at residues 1–42 (MMAR…DPRL), 69–389 (VPAT…HDGA), and 415–437 (HSPE…SEAP). Basic and acidic residues-rich tracts occupy residues 74 to 89 (GKKE…KPRG) and 97 to 114 (NKDK…DPQR). Positions 180 to 197 (LASLSPLRKASLSSSSSL) are enriched in low complexity.

It belongs to the FAM90 family.

This chain is Protein FAM90A8 (FAM90A8), found in Homo sapiens (Human).